The primary structure comprises 413 residues: Tyrosine--tRNA ligase (413 aa).

The 'HIGH' region signature appears at 55–64 (PTRPDLHLGH). The short motif at 242–246 (KMSKS) is the 'KMSKS' region element. Lys-245 contacts ATP. One can recognise an S4 RNA-binding domain in the interval 346–410 (VKLSYILREC…GKKAFRRLVK (65 aa)).

This sequence belongs to the class-I aminoacyl-tRNA synthetase family. TyrS type 2 subfamily. As to quaternary structure, homodimer.

The protein localises to the cytoplasm. The catalysed reaction is tRNA(Tyr) + L-tyrosine + ATP = L-tyrosyl-tRNA(Tyr) + AMP + diphosphate + H(+). Functionally, catalyzes the attachment of tyrosine to tRNA(Tyr) in a two-step reaction: tyrosine is first activated by ATP to form Tyr-AMP and then transferred to the acceptor end of tRNA(Tyr). This is Tyrosine--tRNA ligase from Synechococcus sp. (strain JA-2-3B'a(2-13)) (Cyanobacteria bacterium Yellowstone B-Prime).